The primary structure comprises 1017 residues: Nonsense-mediated mRNA decay factor SMG5 (1017 aa).

N-acetylserine is present on serine 2. Phosphoserine occurs at positions 2 and 423. 2 disordered regions span residues 406–562 (GENP…PSEA) and 597–640 (TEPN…CRNE). Over residues 448-467 (KSRKHSRLSCLRRRRRHHPP) the composition is skewed to basic residues. Residues 486–496 (DSAQASDGSDS) are compositionally biased toward low complexity. The span at 620–629 (ASEDGSESEG) shows a compositional bias: acidic residues. Residues 798-842 (AQSEQESLLQQAQAQFRMAEEEARRNRLMRDMAQLRLQLEVSQLE) are a coiled coil. The 124-residue stretch at 873–996 (RQLATSGRFI…GPMQAALQAA (124 aa)) folds into the PINc domain.

In terms of assembly, interacts with TERT, PPP2CA and SMG1. Part of a complex that contains SMG1, SMG5, SMG7, PPP2CA, a short isoform of UPF3A (isoform UPF3AS, but not isoform UPF3AL) and phosphorylated UPF1. Not detected in complexes that contain unphosphorylated UPF1.

Its subcellular location is the cytoplasm. It is found in the nucleus. Functionally, plays a role in nonsense-mediated mRNA decay. Does not have RNase activity by itself. Promotes dephosphorylation of UPF1. Together with SMG7 is thought to provide a link to the mRNA degradation machinery involving exonucleolytic pathways, and to serve as an adapter for UPF1 to protein phosphatase 2A (PP2A), thereby triggering UPF1 dephosphorylation. Necessary for TERT activity. The chain is Nonsense-mediated mRNA decay factor SMG5 from Mus musculus (Mouse).